A 158-amino-acid chain; its full sequence is Cyclic pyranopterin monophosphate synthase (158 aa).

Residues 76-78 (LCH) and 114-115 (ME) contribute to the substrate site. Aspartate 129 is a catalytic residue.

This sequence belongs to the MoaC family. In terms of assembly, homohexamer; trimer of dimers.

The catalysed reaction is (8S)-3',8-cyclo-7,8-dihydroguanosine 5'-triphosphate = cyclic pyranopterin phosphate + diphosphate. It participates in cofactor biosynthesis; molybdopterin biosynthesis. In terms of biological role, catalyzes the conversion of (8S)-3',8-cyclo-7,8-dihydroguanosine 5'-triphosphate to cyclic pyranopterin monophosphate (cPMP). In Shewanella woodyi (strain ATCC 51908 / MS32), this protein is Cyclic pyranopterin monophosphate synthase.